A 345-amino-acid polypeptide reads, in one-letter code: Phosphoribosylformylglycinamidine cyclo-ligase (345 aa).

Belongs to the AIR synthase family.

The protein resides in the cytoplasm. It carries out the reaction 2-formamido-N(1)-(5-O-phospho-beta-D-ribosyl)acetamidine + ATP = 5-amino-1-(5-phospho-beta-D-ribosyl)imidazole + ADP + phosphate + H(+). The protein operates within purine metabolism; IMP biosynthesis via de novo pathway; 5-amino-1-(5-phospho-D-ribosyl)imidazole from N(2)-formyl-N(1)-(5-phospho-D-ribosyl)glycinamide: step 2/2. The polypeptide is Phosphoribosylformylglycinamidine cyclo-ligase (Escherichia coli O139:H28 (strain E24377A / ETEC)).